A 40-amino-acid polypeptide reads, in one-letter code: Natriuretic peptide PpNP-b (40 aa).

A propeptide spanning residues 1–8 is cleaved from the precursor; that stretch reads SGSKTANI. A disulfide bridge links cysteine 12 with cysteine 28. The interval 20-40 is disordered; it reads IGTTSGMGCGRPRPKPTPGGS.

The protein belongs to the natriuretic peptide family. In terms of tissue distribution, expressed by the venom gland.

The protein resides in the secreted. Snake venom natriuretic peptide that targets both NPR1 and NPR2. Exhibits hypotensive and vasodepressor activities. This chain is Natriuretic peptide PpNP-b, found in Pseudechis porphyriacus (Red-bellied black snake).